A 692-amino-acid polypeptide reads, in one-letter code: Paramyosin (692 aa).

The segment at 1-15 (MNKKRDSELAKLRKL) is nonhelical region. A coiled-coil region spans residues 16-692 (LEDVHIESEE…DHRVKELLLQ (677 aa)). The disordered stretch occupies residues 26 to 57 (TAHHLRQKHQAAIQEMQDQLDQLQKAKNKSDK).

It belongs to the paramyosin family. In terms of assembly, homodimer.

It is found in the cytoplasm. It localises to the myofibril. Paramyosin is a major structural component of many thick filaments isolated from invertebrate muscles. In Dermatophagoides farinae (American house dust mite), this protein is Paramyosin.